An 89-amino-acid polypeptide reads, in one-letter code: Cytochrome b (89 aa).

2 consecutive transmembrane segments (helical) span residues 38–58 (FGPL…FLAM) and 82–89 (WLLRYMHA). Position 88 (His-88) interacts with heme b.

It belongs to the cytochrome b family. In terms of assembly, the main subunits of complex b-c1 are: cytochrome b, cytochrome c1 and the Rieske protein. The cofactor is heme b.

The protein resides in the mitochondrion inner membrane. Component of the ubiquinol-cytochrome c reductase complex (complex III or cytochrome b-c1 complex) that is part of the mitochondrial respiratory chain. The b-c1 complex mediates electron transfer from ubiquinol to cytochrome c. Contributes to the generation of a proton gradient across the mitochondrial membrane that is then used for ATP synthesis. The polypeptide is Cytochrome b (MT-CYB) (Brassica napus (Rape)).